The following is a 94-amino-acid chain: Integration host factor subunit beta (94 aa).

This sequence belongs to the bacterial histone-like protein family. As to quaternary structure, heterodimer of an alpha and a beta chain.

Its function is as follows. This protein is one of the two subunits of integration host factor, a specific DNA-binding protein that functions in genetic recombination as well as in transcriptional and translational control. This Brucella melitensis biotype 2 (strain ATCC 23457) protein is Integration host factor subunit beta.